The sequence spans 1007 residues: Probable beta-galactosidase A (1007 aa).

A signal peptide spans 1 to 18; that stretch reads MKLSSACAIALLAAQAAG. Residues Y96, N140, A141, and E142 each coordinate substrate. N156 carries N-linked (GlcNAc...) asparagine glycosylation. Position 199 (N199) interacts with substrate. Residue E200 is the Proton donor of the active site. A disulfide bridge connects residues C205 and C206. Position 260 (Y260) interacts with substrate. C266 and C315 are oxidised to a cystine. E298 acts as the Nucleophile in catalysis. Y364 lines the substrate pocket. N373, N402, N422, N478, N522, N622, N739, N760, N777, and N805 each carry an N-linked (GlcNAc...) asparagine glycan. Residues 862–881 form a disordered region; that stretch reads RQGFHQPEPPSQDWKSSSPL. N-linked (GlcNAc...) asparagine glycosylation occurs at N914.

This sequence belongs to the glycosyl hydrolase 35 family.

Its subcellular location is the secreted. It catalyses the reaction Hydrolysis of terminal non-reducing beta-D-galactose residues in beta-D-galactosides.. Functionally, cleaves beta-linked terminal galactosyl residues from gangliosides, glycoproteins, and glycosaminoglycans. This Aspergillus phoenicis (Aspergillus saitoi) protein is Probable beta-galactosidase A (lacA).